The sequence spans 289 residues: Phosphatidylglycerol--prolipoprotein diacylglyceryl transferase (289 aa).

The next 3 helical transmembrane spans lie at 13–33 (LGPL…LLGW), 61–81 (FILW…VLFY), and 99–119 (GGMS…LFAM). Residue Arg-144 coordinates a 1,2-diacyl-sn-glycero-3-phospho-(1'-sn-glycerol). 2 helical membrane passes run 218–238 (GVVM…LENV) and 250–270 (LGLT…LWLI).

It belongs to the Lgt family.

It localises to the cell inner membrane. It catalyses the reaction L-cysteinyl-[prolipoprotein] + a 1,2-diacyl-sn-glycero-3-phospho-(1'-sn-glycerol) = an S-1,2-diacyl-sn-glyceryl-L-cysteinyl-[prolipoprotein] + sn-glycerol 1-phosphate + H(+). It functions in the pathway protein modification; lipoprotein biosynthesis (diacylglyceryl transfer). Functionally, catalyzes the transfer of the diacylglyceryl group from phosphatidylglycerol to the sulfhydryl group of the N-terminal cysteine of a prolipoprotein, the first step in the formation of mature lipoproteins. The chain is Phosphatidylglycerol--prolipoprotein diacylglyceryl transferase from Phenylobacterium zucineum (strain HLK1).